The primary structure comprises 418 residues: MAARLPACVVDCGTGYTKLGYAGNTEPQFIIPSCIAIKESAKVGDQAQRRLMKGVDDLDFHIGDEAIDKPTYATKWPIRHGIVEDWDLMERFMEQIIFKYLRAEPEDHYFLLTEPPLNTPENREYTAEIMFESFNVPGLYIAVQAVLALAASWTSRQVGERTLTGTVIDSGDGVTHVIPVAEGYVIGSCIKHIPIAGRDITYFIQQLLRDREVGIPPEQSLETAKAVKEKFSYVCPDLVKEFSKYDTDGAKWIKQYMGVNAVSKKEFSIDVGYERFLGPEIFFHPEFANPDFTQPISEVVDEVIQNCPIDVRRPLYKNIVLSGGSTMFRDFGRRLQRDVKRTVDARLKLSEELSGGRLKPKPIDVQVITHHMQRYAVWFGGSMLASTPEFYQVCHTKKDYEEIGPSICRHNPVFGVMS.

This sequence belongs to the actin family. ARP3 subfamily. Component of the Arp2/3 complex composed of actr2/arp2, actr3/arp3, arpc1 (arpc1a or arpc1b), arpc2, arpc3, arpc4 and arpc5.

The protein resides in the cytoplasm. It localises to the cytoskeleton. The protein localises to the cell projection. It is found in the nucleus. Functionally, ATP-binding component of the Arp2/3 complex, a multiprotein complex that mediates actin polymerization upon stimulation by nucleation-promoting factor (NPF). The Arp2/3 complex mediates the formation of branched actin networks in the cytoplasm, providing the force for cell motility. Seems to contact the pointed end of the daughter actin filament. In addition to its role in the cytoplasmic cytoskeleton, the Arp2/3 complex also promotes actin polymerization in the nucleus, thereby regulating gene transcription and repair of damaged DNA. The Arp2/3 complex promotes homologous recombination (HR) repair in response to DNA damage by promoting nuclear actin polymerization, leading to drive motility of double-strand breaks (DSBs). This is Actin-related protein 3-A from Xenopus laevis (African clawed frog).